We begin with the raw amino-acid sequence, 356 residues long: Myricetin 7/4'-O-methyltransferase 2 (356 aa).

Asp222 is a binding site for S-adenosyl-L-methionine. The active-site Proton acceptor is the His260.

It belongs to the class I-like SAM-binding methyltransferase superfamily. Cation-independent O-methyltransferase family. In terms of assembly, homodimer.

It catalyses the reaction quercetin + S-adenosyl-L-methionine = rhamnetin + S-adenosyl-L-homocysteine + H(+). The enzyme catalyses kaempferol + S-adenosyl-L-methionine = kaempferide + S-adenosyl-L-homocysteine + H(+). The catalysed reaction is myricetin + S-adenosyl-L-methionine = 7-O-methylmyricetin + S-adenosyl-L-homocysteine + H(+). It carries out the reaction kaempferide + S-adenosyl-L-methionine = 7,4'-O-dimethylkaempferol + S-adenosyl-L-homocysteine + H(+). It catalyses the reaction isorhamnetin + S-adenosyl-L-methionine = 3',4'-O-dimethylquercetin + S-adenosyl-L-homocysteine + 2 H(+). The enzyme catalyses 3',4',5,7-tetrahydroxy-3-methoxyflavone + S-adenosyl-L-methionine = 3',4',5-trihydroxy-3,7-dimethoxyflavone + S-adenosyl-L-homocysteine + H(+). The catalysed reaction is rhamnetin + S-adenosyl-L-methionine = 7,4'-O-dimethylquercetin + S-adenosyl-L-homocysteine + H(+). It carries out the reaction syringetin + S-adenosyl-L-methionine = 7,3',5'-O-trimethylmyricetin + S-adenosyl-L-homocysteine + H(+). It catalyses the reaction 3',4',5'-O-trimethylmyricetin + S-adenosyl-L-methionine = 7,3',4',5'-O-tetramethylmyricetin + S-adenosyl-L-homocysteine. The protein operates within flavonoid metabolism. Functionally, flavonoid 7/4'-O-methyltransferase involved in the biosynthesis of polymethoxylated flavonoids natural products such as myricetin derivatives, aroma compounds possessing antioxidant properties and exhibiting pharmacological activities such as anti-carcinogen, anti-viral, anti-thrombotic, anti-diabetic, anti-atherosclerotic, and anti-inflammatory effects. Catalyzes S-adenosylmethionine-dependent regioselective 7/4'-O-methylation of flavonoids; active on various hydroxylated flavonoid substrates. This is Myricetin 7/4'-O-methyltransferase 2 from Solanum lycopersicum (Tomato).